Reading from the N-terminus, the 632-residue chain is tRNA uridine 5-carboxymethylaminomethyl modification enzyme MnmG (632 aa).

Residues 13–18, Val125, and Ser180 contribute to the FAD site; that span reads GGGHAG. 273-287 contacts NAD(+); the sequence is GPRYCPSIEDKINRF. Gln370 contributes to the FAD binding site.

It belongs to the MnmG family. Homodimer. Heterotetramer of two MnmE and two MnmG subunits. FAD is required as a cofactor.

Its subcellular location is the cytoplasm. In terms of biological role, NAD-binding protein involved in the addition of a carboxymethylaminomethyl (cmnm) group at the wobble position (U34) of certain tRNAs, forming tRNA-cmnm(5)s(2)U34. The chain is tRNA uridine 5-carboxymethylaminomethyl modification enzyme MnmG from Shewanella sediminis (strain HAW-EB3).